Reading from the N-terminus, the 70-residue chain is uncharacterized protein (70 aa).

Transmembrane regions (helical) follow at residues 13-33 and 39-59; these read YYAFAIGLIFILNGVVGLLGF and QTYAVGLVTWVISFWLAGLII.

It is found in the cell membrane. This is an uncharacterized protein from Escherichia coli O6:H1 (strain CFT073 / ATCC 700928 / UPEC).